Reading from the N-terminus, the 387-residue chain is MSTATTTVTTSDQASHPTKIYCSGLQCGRETSSQMKCPVCLKQGIVSIFCDTSCYENNYKAHKALHNAKDGLEGAYDPFPKFKYSGKVKASYPLTPRRYVPEDIPKPDWAANGLPVSEQRNDRLNNIPIYKKDQIKKIRKACMLGREVLDIAAAHVRPGITTDELDEIVHNETIKRGAYPSPLNYYNFPKSLCTSVNEVICHGVPDKTVLKEGDIVNLDVSLYYQGYHADLNETYYVGENISKEALNTTETSRECLKLAIKMCKPGTTFQELGDHIEKHATENKCSVVRTYCGHGVGEFFHCSPNIPHYAKNRTPGVMKPGMVFTIEPMINEGTWKDMTWPDDWTSTTQDGKLSAQFEHTLLVTEHGVEILTARNKKSPGGPRQRIK.

An N-acetylserine modification is found at Ser-2. Positions 2 to 10 are excised as a propeptide; sequence STATTTVTT. The segment at 19–73 adopts a C6H2-type zinc-finger fold; sequence KIYCSGLQCGRETSSQMKCPVCLKQGIVSIFCDTSCYENNYKAHKALHNAKDGLE. Positions 22, 27, 37, 40, 50, 54, 62, and 66 each coordinate Zn(2+). His-202 contributes to the a protein binding site. Asp-219, Asp-230, and His-294 together coordinate Zn(2+). A protein is bound at residue His-301. Residues Glu-327 and Glu-358 each contribute to the Zn(2+) site.

The protein belongs to the peptidase M24A family. Methionine aminopeptidase type 1 subfamily. In terms of assembly, associates with the 60S ribosomal subunit of the 80S translational complex. Zn(2+) serves as cofactor. Requires Co(2+) as cofactor. Mn(2+) is required as a cofactor. It depends on Fe(2+) as a cofactor.

The protein localises to the cytoplasm. The enzyme catalyses Release of N-terminal amino acids, preferentially methionine, from peptides and arylamides.. With respect to regulation, in contract to the MetAP 2 isoform, is not inhibited by the fungal metabolite fumagillin, an antiangiogenic drug. Functionally, cotranslationally removes the N-terminal methionine from nascent proteins. The N-terminal methionine is often cleaved when the second residue in the primary sequence is small and uncharged (Met-Ala-, Cys, Gly, Pro, Ser, Thr, or Val). Plays the major role in N-terminal methionine removal. Less efficient when the second residue is Val. In Saccharomyces cerevisiae (strain ATCC 204508 / S288c) (Baker's yeast), this protein is Methionine aminopeptidase 1 (MAP1).